The chain runs to 540 residues: Chaperonin GroEL (540 aa).

ATP-binding positions include 29-32, 86-90, G413, 476-478, and D492; these read TLGP, DGTTT, and NAA.

It belongs to the chaperonin (HSP60) family. In terms of assembly, forms a cylinder of 14 subunits composed of two heptameric rings stacked back-to-back. Interacts with the co-chaperonin GroES.

It is found in the cytoplasm. It carries out the reaction ATP + H2O + a folded polypeptide = ADP + phosphate + an unfolded polypeptide.. In terms of biological role, together with its co-chaperonin GroES, plays an essential role in assisting protein folding. The GroEL-GroES system forms a nano-cage that allows encapsulation of the non-native substrate proteins and provides a physical environment optimized to promote and accelerate protein folding. This Streptococcus pneumoniae (strain ATCC 700669 / Spain 23F-1) protein is Chaperonin GroEL.